The primary structure comprises 469 residues: MDKNDYLHFERNPSLFPKSTLDKVQKTKKYIEHYYKVAVDHAVERNQRRINLEQRLATERGSEERKNRQLRASGEKESQFLRFRRTRLSLEDFSTIKVIGKGAFGEVRLVQKLDTGKIYAMKSLLKTEMFKRDQLAHVKAERDLLVESDSPWVVSLYYAFQDSLYLYLIMEFLPGGDLMTMLINYDTFSEDVTRFYMAECVLAIADVHRMGYIHRDIKPDNILIDRDGHIKLSDFGLSTGFYKQDQSASYMKPRTGNTVKRGQMVDAIWLTMSSKDKMATWKKNRRVMAYSTVGTPDYIAPEIFLQQGYGQDCDWWSLGAIMFECLIGWPPFCSENSHETYRKIINWRETLTFPNDIHLSIEARDLMDRLMTDSEHRLGRGGAIEIMQHPFFTGIDWDHIRETAAPFIPNLKSITDTHYFPVDELEQVPEQPVTQQPASVDPQTLEQTNLAFLGYTYKKFNYLTMKGAL.

The Protein kinase domain maps to 93 to 392; that stretch reads FSTIKVIGKG…AIEIMQHPFF (300 aa). Residues 99–107 and Lys-122 contribute to the ATP site; that span reads IGKGAFGEV. Asp-216 (proton acceptor) is an active-site residue. The AGC-kinase C-terminal domain occupies 393–467; the sequence is TGIDWDHIRE…KKFNYLTMKG (75 aa).

This sequence belongs to the protein kinase superfamily. Ser/Thr protein kinase family. In terms of assembly, interacts with mob2.

It carries out the reaction L-seryl-[protein] + ATP = O-phospho-L-seryl-[protein] + ADP + H(+). It catalyses the reaction L-threonyl-[protein] + ATP = O-phospho-L-threonyl-[protein] + ADP + H(+). Its function is as follows. Interacts with pak1/shk1 and coordinates cell morphogenesis with the cell cycle. It is essential for maintenance of cell polarity and is involved in mitotic control. This chain is Serine/threonine-protein kinase orb6 (orb6), found in Schizosaccharomyces pombe (strain 972 / ATCC 24843) (Fission yeast).